The chain runs to 196 residues: Cyclin-dependent kinase inhibitor 6 (196 aa).

Disordered stretches follow at residues 1–36 (MSER…PDSH) and 55–151 (ASDE…RKTP). Residues 124–139 (SEGLGETTTEMESSSA) are compositionally biased toward low complexity. Thr152 carries the post-translational modification Phosphothreonine; by KIN10.

It belongs to the CDI family. ICK/KRP subfamily. Specifically interacts with CDKA-1, but not with CDKB1-1. Interacts with CYCD1-1, CYCD4-1 and RHF1A. Binds to FBL17. Interacts with KIN10. Interacts with CYCD3-1. In terms of processing, ubiquitinated by RHF1A and SCF(FBL17). Ubiquitination leads to its subsequent degradation, thus controlling cell cycle progression. The phosphorylation at Thr-152 by KIN10 represses its activity. In terms of tissue distribution, expressed in newly formed organs such as the shoot apex. Expressed in cotyledon, primary root and marginal region of the leaves as well as in developing pollen.

The protein localises to the nucleus. It localises to the nucleoplasm. Down-regulated by KIN10 under a phosphorylation-dependent manner. Functionally, binds and inhibits CYCD2-1/CDKA-1 complex kinase activity. Regulates cell division which is crucial for plant growth, development and morphogenesis. May inhibit CDK kinases specifically involved in the G1/S phase transition. This chain is Cyclin-dependent kinase inhibitor 6 (KRP6), found in Arabidopsis thaliana (Mouse-ear cress).